The primary structure comprises 822 residues: MSEGTYQRLWEASHATLEEVLEKEPSPLEPVLTRERQSFQYRISVLYLYYLGLLRRFNLAYDQMVQPQKRRLLRRLLDGVAGRVLELKDELVRVDLCETHCLDRVLQELKLTPVDLEVPIPKYFQLEQTSTMKARQQMLAEILARLEPLASQENLRGMSRTEALIIVQCAERARQGRLRATFMREIRKEEERDRRIRENGRQKFSQDQGAIVIQKVWKGYLQRKRIEQDRRMEMEFIGMLPSSSQTTRQNALAQAFVGEESRRTRQVEKEEEFQEAIAKTHESLTETEGPDMKERMKDQIRQWFIECHALTGRFPDYPDEASGGSYLIFADKTPEQVRQELEAQAQENKKKEQEKNKDKVKEKKEKKKKKTKEEKAKKDPEVMFKVLPSKSIPVINAGHEEFTSIWKSRYDNKHPSQSFDSETLREEKRKQVEMEIRVQVDELMRQELRNLRLAVDREETRPLKSPKKKGGKKSGKKKKEKDLTPDRSVDSLFEELVVIGLIKKSLLVTLNDYIGDCLYLGSTLTLANKIPMPSLFDIRQNIALYGVLRLGSHDIHTMAPLVRSILLVGPSGMGKKMLVQAVCTETGANLFDLSPGNVMGKYPGKNGSQLLMHIVFKVARVFQPSVIWIGNTEKTFYKKIPKEERRMDPKRIKKDLMRATRQLGPGDRVMLIGTTERPQLAEMKGLCRFYERILFIPRPDYASRYVLWKRMIENQGIGVQQTQSLDISALARVSDGYTPGHILQSIQSVLTERRLLQLTKKPLVASEFVVHLAKLDPVYREEEESLKEWFYKTPLGKKNIKFTKDQQEAEEARLAKEKKKKK.

Residues 206–235 enclose the IQ domain; it reads QDQGAIVIQKVWKGYLQRKRIEQDRRMEME. A compositionally biased stretch (basic and acidic residues) spans 338-363; the sequence is RQELEAQAQENKKKEQEKNKDKVKEK. 2 disordered regions span residues 338-378 and 457-484; these read RQEL…KAKK and REET…KDLT. Basic residues predominate over residues 464 to 479; it reads KSPKKKGGKKSGKKKK. ATP is bound at residue 569 to 576; the sequence is GPSGMGKK.

The protein belongs to the AAA ATPase family.

In Rattus norvegicus (Rat), this protein is IQ and AAA domain-containing protein 1-like (Iqca1l).